The sequence spans 391 residues: Putative 12-oxophytodienoate reductase 6 (391 aa).

Residues 42–44 (PMT), alanine 75, and glutamine 117 each bind FMN. Residue 189 to 192 (HGAN) participates in substrate binding. The Proton donor role is filled by tyrosine 194. Arginine 241 contributes to the FMN binding site. Arginine 282 contacts substrate. Residues glycine 312 and 333 to 334 (GR) each bind FMN. A disordered region spans residues 372–391 (YPFLDEHHHDDDDDSNAPSA). Residues 382-391 (DDDDSNAPSA) show a composition bias toward acidic residues.

The protein belongs to the NADH:flavin oxidoreductase/NADH oxidase family. FMN is required as a cofactor.

In terms of biological role, putative oxophytodienoate reductase that may be involved in the biosynthesis or metabolism of oxylipin signaling molecules. The protein is Putative 12-oxophytodienoate reductase 6 (OPR6) of Oryza sativa subsp. japonica (Rice).